The chain runs to 200 residues: Large ribosomal subunit protein uL4 (200 aa).

The disordered stretch occupies residues Thr-42 to Gly-65.

Belongs to the universal ribosomal protein uL4 family. As to quaternary structure, part of the 50S ribosomal subunit.

Its function is as follows. One of the primary rRNA binding proteins, this protein initially binds near the 5'-end of the 23S rRNA. It is important during the early stages of 50S assembly. It makes multiple contacts with different domains of the 23S rRNA in the assembled 50S subunit and ribosome. In terms of biological role, forms part of the polypeptide exit tunnel. The chain is Large ribosomal subunit protein uL4 from Photobacterium profundum (strain SS9).